A 3960-amino-acid polypeptide reads, in one-letter code: Replicase polyprotein 1ab (3960 aa).

A C4-type; atypical zinc finger spans residues 8–28 (CTCTPNARVFMAEGQVYCTRC). In terms of domain architecture, Peptidase C31 spans 69–180 (ECSPAGACWL…EDFCPFECAM (112 aa)). Positions 69–182 (ECSPAGACWL…FCPFECAMAT (114 aa)) are PCP1-alpha. Residues Cys76 and His146 each act as for Nsp1-alpha papain-like cysteine proteinase activity in the active site. The tract at residues 199–200 (VS) is important for host EIF2AK2 inhibition. A PCP1-beta region spans residues 263–382 (DTVPEGNCWW…IFRFGSHKWY (120 aa)). The Peptidase C32 domain maps to 263 to 383 (DTVPEGNCWW…FRFGSHKWYG (121 aa)). Active-site for Nsp1-beta papain-like cysteine proteinase activity residues include Cys270 and His339. Residues 426–513 (LKHYSPPAEG…GEHWTVTVTP (88 aa)) form an OTU-like region. The Peptidase C33 domain occupies 428–535 (HYSPPAEGNC…QGCCGHKGGL (108 aa)). Catalysis depends on for Nsp2 cysteine proteinase activity residues Cys437 and His506. Disordered stretches follow at residues 809–882 (RWTP…ATPS), 899–979 (TPLS…GVLG), and 1156–1213 (PLAF…GGGP). Pro residues predominate over residues 810–819 (WTPPPPPPKV). 8 consecutive transmembrane segments (helical) span residues 1266–1286 (LCLF…LGVF), 1296–1316 (GVFG…SDPV), 1345–1365 (SLVV…LGGA), 1368–1388 (IWHF…GAYV), 1583–1603 (LMAA…GIYV), 1650–1670 (ALVA…FVSI), 1685–1705 (CVLL…LCVF), and 1719–1739 (ILWL…LAMV). The tract at residues 1266–1388 (LCLFLCYSYP…ADCILAGAYV (123 aa)) is HD1. The interval 1583 to 1745 (LMAALHVACS…LAMVLLVSLW (163 aa)) is HD2. In terms of domain architecture, Peptidase S32 spans 1810-2013 (GAFRTRKPSL…ALLAAKPELE (204 aa)). Active-site charge relay system; for 3C-like serine proteinase activity residues include His1848, Asp1873, and Ser1927. 5 helical membrane-spanning segments follow: residues 2012–2032 (LEGG…WRMM), 2060–2080 (FSFG…VLMI), 2092–2112 (WSLA…LAAT), 2137–2157 (SPVP…LYLF), and 2164–2184 (HILV…FAEG). The interval 2036–2157 (WTPLVAVSFF…HLLAIILYLF (122 aa)) is HD3. Positions 2329 to 2358 (PTPTPPPAPVPIPLPPKVLENGPNAWGDED) are disordered. Pro residues predominate over residues 2330–2344 (TPTPPPAPVPIPLPP). Residues 2488-2650 (IIDKLQGLTK…LPYKLYPVRG (163 aa)) form the NiRAN domain. In terms of domain architecture, RdRp catalytic spans 2889 to 3023 (GRCLEADLAS…YAESPTMPNY (135 aa)). Residues 3144-3207 (GKKSRVCGYC…SPVGKGTSPL (64 aa)) form the AV ZBD domain. Residues Cys3150, Cys3153, Cys3163, Cys3168, His3171, His3173, His3175, His3177, Cys3184, His3186, Cys3193, and Cys3196 each coordinate Zn(2+). The (+)RNA virus helicase ATP-binding domain occupies 3264–3416 (ASTALLPTCK…VFDIMPQTQL (153 aa)). ATP is bound at residue 3292-3299 (GPPGAGKT). Residues 3417 to 3545 (KTIWRFGQNI…AVHCDGQLIV (129 aa)) form the (+)RNA virus helicase C-terminal domain. Residues 3584–3680 (EGSSSPLPKV…LTKFVKGGAQ (97 aa)) form the AV-Nsp11N/CoV-Nsp15M domain. Positions 3682 to 3804 (LPETVFSTGR…MVWKDKTAYF (123 aa)) constitute a NendoU domain. Active-site residues include His3713, His3728, and Lys3757.

Belongs to the arteriviridae polyprotein family. As to quaternary structure, nsp1-alpha papain-like: Interacts with host RNF31. In terms of assembly, interacts with host EIF2AK2; this interaction occurs in host stress granules and leads to EIF2AK2 inhibition. Interacts with host G3BP1; this interaction probably plays a role in Nsp1-beta-mediated inhibition of host EIF2AK2. Interacts with host DDX18; this interaction redistributes host DDX18 to the cytoplasm. As to quaternary structure, interacts with host IFITM1. In terms of assembly, interacts with host DDX5. Interacts with host OTULIN. As to quaternary structure, interacts with host LGALS3. Post-translationally, specific enzymatic cleavages in vivo by its own proteases yield mature proteins. Nsp1 is autocleaved into two subunits, Nsp1-alpha and Nsp1-beta. There are two alternative pathways for processing. Either nsp4-5 is cleaved, which represents the major pathway or the nsp5-6 and nsp6-7 are processed, which represents the minor pathway. The major pathway occurs when nsp2 acts as a cofactor for nsp4.

The protein resides in the host nucleus. The protein localises to the host cytoplasm. It is found in the host membrane. It localises to the host endoplasmic reticulum. Its subcellular location is the host perinuclear region. It carries out the reaction RNA(n) + a ribonucleoside 5'-triphosphate = RNA(n+1) + diphosphate. It catalyses the reaction ATP + H2O = ADP + phosphate + H(+). The enzyme catalyses Thiol-dependent hydrolysis of ester, thioester, amide, peptide and isopeptide bonds formed by the C-terminal Gly of ubiquitin (a 76-residue protein attached to proteins as an intracellular targeting signal).. The catalysed reaction is uridylyl-uridylyl-ribonucleotide-RNA = a 3'-end uridylyl-2',3'-cyclophospho-uridine-RNA + a 5'-end dephospho-ribonucleoside-RNA. Its function is as follows. Contains the activities necessary for the transcription of negative stranded RNA, leader RNA, subgenomic mRNAs and progeny virion RNA as well as proteinases responsible for the cleavage of the polyprotein into functional products. Functionally, inhibits host IFN-beta production. Plays a role in the degradation of the host transcriptional activator CREBBP protein. The degradation of host CREBBP which is a key component of the IFN enhanceosome is likely responsible for the inhibition of interferon mediated by Nsp1-alpha. Also participates in the inhibition of host NF-kappa-B activation by counteracting LUBAC-dependent induction of NF-kappa-B. Reduces host NEMO ubiquitination by blocking the interaction between the two LUBAC complex components RNF31 and SHARPIN. Plays a role in blocking host mRNA nuclear export to the cytoplasm and subversion of host protein synthesis. Additionally, inhibits the interferon-activated JAK/STAT signal transduction by mediating the ubiquitination and subsequent proteasomal degradation of host KPNA1. Repurposes the host antiviral stress granules into a proviral platform to counteract the EIF2AK2/PKR restriction, thereby regulating the host inflammatory response. In terms of biological role, multifunctional protein that acts as a viral protease and as a viral antagonist of host immune response. Cleaves the nsp2/nsp3 site in the viral polyprotein. Displays deubiquitinating activity that cleaves both ubiquitinated and ISGylated products and therefore inhibits ubiquitin and ISG15-dependent host innate immunity. Also deubiquinates host NFKBIA, thereby interfering with NFKBIA degradation and impairing subsequent NF-kappa-B activation. Its function is as follows. Plays a role in the inhibition of the immune response by interacting with host IFITM1. This interaction leads to the proteasomal degradation of the IFN-induced antiviral protein IFITM1. Functionally, cleaves the majority of cleavage sites present in the C-terminus of the polyprotein. Triggers host apoptosis through caspase-3, -8, and -9 activations. Subverts host innate immune responses through its protease activity. Targets the NF-kappa-B essential modulator NEMO and mediates its cleavage. Blocks host interferon beta induction and downstream signaling by cleaving mitochondrial MAVS, dislodging it from the mitochondria. Impairs host defense by cleaving host mRNA-decapping enzyme DCP1A to attenuate its antiviral activity. Plays a role in the initial induction of autophagosomes from host endoplasmic reticulum. In terms of biological role, plays a role in the inhibition of host STAT3 signaling pathway by inducing the degradation of STAT3. Its function is as follows. Responsible for replication and transcription of the viral RNA genome. Functionally, displays RNA and DNA duplex-unwinding activities with 5' to 3' polarity. Plays a role in viral transcription/replication and prevents the simultaneous activation of host cell dsRNA sensors, such as MDA5/IFIH1, OAS, PKR and NLRP3 inflammasome. Acts by degrading the 5'-polyuridines generated during replication of the poly(A) region of viral genomic and subgenomic RNAs. Catalyzes a two-step reaction in which a 2'3'-cyclic phosphate (2'3'-cP) is first generated by 2'-O transesterification, which is then hydrolyzed to a 3'-phosphate (3'-P). If not degraded, poly(U) RNA would hybridize with poly(A) RNA tails and activate host dsRNA sensors. Also plays a role in the inhibition of host type I interferon production by recruiting host OTULIN to promote removal of linear ubiquitination targeting host NEMO. In Porcine reproductive and respiratory syndrome virus (strain VR-2332) (PRRSV), this protein is Replicase polyprotein 1ab (rep).